A 158-amino-acid chain; its full sequence is Serglycin (158 aa).

The signal sequence occupies residues Met1–Gly27. Cys40 and Cys49 are joined by a disulfide. 2 O-linked (Xyl...) (glycosaminoglycan) serine glycosylation sites follow: Ser94 and Ser96. Repeat copies occupy residues Ser94 to Gly95, Ser96 to Gly97, Phe98 to Gly99, Ser100 to Gly101, Ser102 to Gly103, Ser104 to Gly105, Ser106 to Gly107, Ser108 to Gly109, and Ser110 to Gly111. The 9 X 2 AA tandem repeats of [SF]-G stretch occupies residues Ser94–Gly111. O-linked (Xyl...) (glycosaminoglycan) serine glycosylation is found at Ser100, Ser102, Ser104, Ser106, Ser108, and Ser110. Residues Arg134–Leu158 form a disordered region.

Belongs to the serglycin family. Binds to activated CD44 and to GZMB. In terms of processing, O-glycosylated; contains chondroitin sulfate and heparan sulfate.

It is found in the cytoplasmic granule. The protein localises to the cytolytic granule. Its subcellular location is the secreted. It localises to the extracellular space. The protein resides in the golgi apparatus. Its function is as follows. Plays a role in formation of mast cell secretory granules and mediates storage of various compounds in secretory vesicles. Required for storage of some proteases in both connective tissue and mucosal mast cells and for storage of granzyme B in T-lymphocytes. Plays a role in localizing neutrophil elastase in azurophil granules of neutrophils. Mediates processing of MMP2. Plays a role in cytotoxic cell granule-mediated apoptosis by forming a complex with granzyme B which is delivered to cells by perforin to induce apoptosis. Regulates the secretion of TNF-alpha and may also regulate protease secretion. Inhibits bone mineralization. This is Serglycin (SRGN) from Homo sapiens (Human).